The chain runs to 1084 residues: MNTGGRLIAGSHNRNEFVLINADENARIRSVQELSGQTCQICRDEIELTVDGEPFVACNECAFPVCRPCYEYERREGNQACPQCKTRFKRLKGSPRVEGDEEEDDIDDLDNEFEYGNNGIGFDQVSEGMSISRRNSGFPQSDLDSAPPGSQIPLLTYGDEDVEISSDRHALIVPPSLGGHGNRVHPVSLSDPTVAAHPRPMVPQKDLAVYGYGSVAWKDRMEEWKRKQNEKLQVVRHEGDPDFEDGDDADFPMMDEGRQPLSRKIPIKSSKINPYRMLIVLRLVILGLFFHYRILHPVKDAYALWLISVICEIWFAVSWVLDQFPKWYPIERETYLDRLSLRYEKEGKPSGLSPVDVFVSTVDPLKEPPLITANTVLSILAVDYPVDKVACYVSDDGAAMLTFEALSETAEFARKWVPFCKKYCIEPRAPEWYFCHKMDYLKNKVHPAFVRERRAMKRDYEEFKVKINALVATAQKVPEDGWTMQDGTPWPGNSVRDHPGMIQVFLGSDGVRDVENNELPRLVYVSREKRPGFDHHKKAGAMNSLIRVSGVLSNAPYLLNVDCDHYINNSKALREAMCFMMDPQSGKKICYVQFPQRFDGIDRHDRYSNRNVVFFDINMKGLDGLQGPIYVGTGCVFRRQALYGFDAPKKKKGPRKTCNCWPKWCLLCFGSRKNRKAKTVAADKKKKNREASKQIHALENIEEGRVTKGSNVEQSTEAMQMKLEKKFGQSPVFVASARMENGGMARNASPACLLKEAIQVISCGYEDKTEWGKEIGWIYGSVTEDILTGFKMHSHGWRSVYCTPKLAAFKGSAPINLSDRLHQVLRWALGSVEIFLSRHCPIWYGYGGGLKWLERLSYINSVVYPWTSLPLIVYCSLPAICLLTGKFIVPEISNYASILFMALFSSIAITGILEMQWGKVGIDDWWRNEQFWVIGGVSAHLFALFQGLLKVLAGVDTNFTVTSKAADDGEFSDLYLFKWTSLLIPPMTLLIINVIGVIVGVSDAISNGYDSWGPLFGRLFFALWVIIHLYPFLKGLLGKQDRMPTIIVVWSILLASILTLLWVRVNPFVAKGGPILEICGLDCL.

Met1 bears the N-acetylmethionine mark. Residues 1 to 277 lie on the Cytoplasmic side of the membrane; that stretch reads MNTGGRLIAG…KSSKINPYRM (277 aa). Zn(2+) contacts are provided by Cys39, Cys42, Cys58, Cys61, Cys66, Cys69, Cys81, and Cys84. The segment at 39-85 adopts an RING-type; degenerate zinc-finger fold; the sequence is CQICRDEIELTVDGEPFVACNECAFPVCRPCYEYERREGNQACPQCK. A helical transmembrane segment spans residues 278 to 298; the sequence is LIVLRLVILGLFFHYRILHPV. The Extracellular portion of the chain corresponds to 299–300; sequence KD. A helical membrane pass occupies residues 301–321; that stretch reads AYALWLISVICEIWFAVSWVL. The Cytoplasmic portion of the chain corresponds to 322–868; sequence DQFPKWYPIE…INSVVYPWTS (547 aa). UDP-alpha-D-glucose is bound by residues Ser360, Lys366, Glu367, and Asp396. Asp396 is a catalytic residue. Positions 450–476 form a coiled coil; sequence VRERRAMKRDYEEFKVKINALVATAQK. Lys537 contributes to the UDP-alpha-D-glucose binding site. Mn(2+) is bound by residues Lys538 and Asp562. Residues 675-703 are a coiled coil; it reads RKAKTVAADKKKKNREASKQIHALENIEE. Residue Asp785 is part of the active site. The chain crosses the membrane as a helical span at residues 869–889; it reads LPLIVYCSLPAICLLTGKFIV. Residues 890–894 are Extracellular-facing; the sequence is PEISN. Residues 895 to 915 form a helical membrane-spanning segment; sequence YASILFMALFSSIAITGILEM. At 916–930 the chain is on the cytoplasmic side; sequence QWGKVGIDDWWRNEQ. The helical transmembrane segment at 931–951 threads the bilayer; that stretch reads FWVIGGVSAHLFALFQGLLKV. The Extracellular portion of the chain corresponds to 952 to 980; that stretch reads LAGVDTNFTVTSKAADDGEFSDLYLFKWT. N-linked (GlcNAc...) asparagine glycosylation occurs at Asn958. Residues 981–1001 form a helical membrane-spanning segment; the sequence is SLLIPPMTLLIINVIGVIVGV. Topologically, residues 1002-1012 are cytoplasmic; it reads SDAISNGYDSW. The helical transmembrane segment at 1013 to 1033 threads the bilayer; the sequence is GPLFGRLFFALWVIIHLYPFL. The Extracellular segment spans residues 1034 to 1042; that stretch reads KGLLGKQDR. A helical membrane pass occupies residues 1043–1063; it reads MPTIIVVWSILLASILTLLWV. Over 1064-1084 the chain is Cytoplasmic; sequence RVNPFVAKGGPILEICGLDCL.

It belongs to the glycosyltransferase 2 family. Plant cellulose synthase subfamily. Interacts with CESA1 and CESA3. Interacts with STL1 and STL2, but not with GOT1. Binds to CSI1 and CSI3. Interacts with PAT24/TIP1. It depends on Zn(2+) as a cofactor. The cofactor is Mn(2+). Post-translationally, S-acylated. Expressed in germinating seeds, seedlings, roots, stems, leaves and flowers. Not present in mature flowers.

It is found in the cell membrane. The enzyme catalyses [(1-&gt;4)-beta-D-glucosyl](n) + UDP-alpha-D-glucose = [(1-&gt;4)-beta-D-glucosyl](n+1) + UDP + H(+). Its pathway is glycan metabolism; plant cellulose biosynthesis. In terms of biological role, catalytic subunit of cellulose synthase terminal complexes ('rosettes'), required for beta-1,4-glucan microfibril crystallization, a major mechanism of the cell wall formation. Involved in the primary cell wall formation. The presence of each protein CESA1 and CESA6 is critical for cell expansion. The hypocotyl elongation is based on a CESA6-dependent cell elongation in dark and a CESA6-independent cell elongation in light. The transition between these two mechanisms requires photosynthesis and PHYB, but not CRY1. The CESA6-dependent cell elongation seems to be independent of gibberellic acid, auxin and ethylene. May be involved in sensitivity to isoxaben. Associates with and moves along cortical microtubules for the process of cellulose deposition. The sequence is that of Cellulose synthase A catalytic subunit 6 [UDP-forming] from Arabidopsis thaliana (Mouse-ear cress).